We begin with the raw amino-acid sequence, 805 residues long: Cell division cycle protein 48 homolog (805 aa).

ATP-binding positions include glycine 249–threonine 256 and glycine 522–threonine 529. The tract at residues glycine 783 to serine 805 is disordered.

The protein belongs to the AAA ATPase family.

Functionally, probably functions in cell division and growth processes. This Capsicum annuum (Capsicum pepper) protein is Cell division cycle protein 48 homolog (CAFP).